Reading from the N-terminus, the 140-residue chain is MGMTVLAFDFGTKSIGCAVGQSITGTAQALPAFKAQDGIPNWDAIGKCLAEWQPDRVVVGLPLNMDGTEQDLTVRARKFAHRLHGRFGVAVELQDERLTTTEARAEIFGRGGYKALNKSKVDGISACLILESWFENQQVK.

This sequence belongs to the YqgF nuclease family.

It localises to the cytoplasm. In terms of biological role, could be a nuclease involved in processing of the 5'-end of pre-16S rRNA. The polypeptide is Putative pre-16S rRNA nuclease (Pasteurella multocida (strain Pm70)).